A 372-amino-acid chain; its full sequence is NAD(P)H-quinone oxidoreductase subunit 1 (372 aa).

Helical transmembrane passes span Ala-27–Val-47, Trp-97–Val-117, Val-128–Met-148, Ala-166–Met-186, Ile-204–Leu-224, Tyr-249–Ser-269, Ser-308–Leu-328, and Val-351–Gly-371.

This sequence belongs to the complex I subunit 1 family. NDH-1 is composed of at least 11 different subunits.

It is found in the cellular thylakoid membrane. It catalyses the reaction a plastoquinone + NADH + (n+1) H(+)(in) = a plastoquinol + NAD(+) + n H(+)(out). The catalysed reaction is a plastoquinone + NADPH + (n+1) H(+)(in) = a plastoquinol + NADP(+) + n H(+)(out). Its function is as follows. NDH-1 shuttles electrons from an unknown electron donor, via FMN and iron-sulfur (Fe-S) centers, to quinones in the respiratory and/or the photosynthetic chain. The immediate electron acceptor for the enzyme in this species is believed to be plastoquinone. Couples the redox reaction to proton translocation, and thus conserves the redox energy in a proton gradient. This is NAD(P)H-quinone oxidoreductase subunit 1 from Nostoc punctiforme (strain ATCC 29133 / PCC 73102).